We begin with the raw amino-acid sequence, 307 residues long: Upstream stimulatory factor 1 (307 aa).

Disordered stretches follow at residues 104 to 131 and 168 to 207; these read DDNGETDASGPETHYTYFPTDSSTSVGG and QGGSQRSIAPRTHPYSPKSDGPRTTRDDKRRAQHNEVERR. The span at 122 to 131 shows a compositional bias: low complexity; sequence PTDSSTSVGG. The span at 187 to 207 shows a compositional bias: basic and acidic residues; that stretch reads DGPRTTRDDKRRAQHNEVERR. One can recognise a bHLH domain in the interval 196–251; the sequence is KRRAQHNEVERRRRDKINNWIVQLSKIIPDCSMESTKTGQSKGGILSKACDYIQEL. The tract at residues 268-289 is leucine-zipper; sequence LQMDNEVLRQQVEDLKNNNLTL.

In terms of assembly, efficient DNA binding requires dimerization with another bHLH protein. Binds DNA as a homodimer or a heterodimer. As to expression, oocyte and somatic tissue. Oocytic and somatic forms of this protein exist, probably as a result of post-translational modifications or minor splicing differences.

The protein resides in the nucleus. In terms of biological role, may act as a regulator of transcription factor IIIA (TFIIIA) gene expression. This is Upstream stimulatory factor 1 (usf1) from Xenopus borealis (Kenyan clawed frog).